The following is a 150-amino-acid chain: SsrA-binding protein (150 aa).

Belongs to the SmpB family.

The protein localises to the cytoplasm. Its function is as follows. Required for rescue of stalled ribosomes mediated by trans-translation. Binds to transfer-messenger RNA (tmRNA), required for stable association of tmRNA with ribosomes. tmRNA and SmpB together mimic tRNA shape, replacing the anticodon stem-loop with SmpB. tmRNA is encoded by the ssrA gene; the 2 termini fold to resemble tRNA(Ala) and it encodes a 'tag peptide', a short internal open reading frame. During trans-translation Ala-aminoacylated tmRNA acts like a tRNA, entering the A-site of stalled ribosomes, displacing the stalled mRNA. The ribosome then switches to translate the ORF on the tmRNA; the nascent peptide is terminated with the 'tag peptide' encoded by the tmRNA and targeted for degradation. The ribosome is freed to recommence translation, which seems to be the essential function of trans-translation. In Bacteroides thetaiotaomicron (strain ATCC 29148 / DSM 2079 / JCM 5827 / CCUG 10774 / NCTC 10582 / VPI-5482 / E50), this protein is SsrA-binding protein.